A 224-amino-acid chain; its full sequence is Mammalian ependymin-related protein 1 (224 aa).

The N-terminal stretch at 1 to 37 (MPGRAPLHTVPGALGPWLLGCLWAWTLCGLCSLGAVG) is a signal peptide. 3 disulfides stabilise this stretch: Cys-42/Cys-172, Cys-88/Cys-222, and Cys-113/Cys-210. Residues Asn-130 and Asn-182 are each glycosylated (N-linked (GlcNAc...) asparagine).

The protein belongs to the ependymin family. Homodimer. Post-translationally, N-glycosylated; the glycan contains mannose-6-phosphate moieties.

It is found in the lysosome lumen. Its subcellular location is the secreted. Functionally, binds anionic lipids and gangliosides at acidic pH. This is Mammalian ependymin-related protein 1 (EPDR1) from Macaca fascicularis (Crab-eating macaque).